Reading from the N-terminus, the 77-residue chain is Exodeoxyribonuclease 7 small subunit (77 aa).

The protein belongs to the XseB family. In terms of assembly, heterooligomer composed of large and small subunits.

The protein localises to the cytoplasm. The enzyme catalyses Exonucleolytic cleavage in either 5'- to 3'- or 3'- to 5'-direction to yield nucleoside 5'-phosphates.. Functionally, bidirectionally degrades single-stranded DNA into large acid-insoluble oligonucleotides, which are then degraded further into small acid-soluble oligonucleotides. This is Exodeoxyribonuclease 7 small subunit from Trichlorobacter lovleyi (strain ATCC BAA-1151 / DSM 17278 / SZ) (Geobacter lovleyi).